The chain runs to 447 residues: UDP-N-acetylmuramate--L-alanine ligase (447 aa).

Residue 108–114 (GSHGKTS) participates in ATP binding.

It belongs to the MurCDEF family.

The protein resides in the cytoplasm. It carries out the reaction UDP-N-acetyl-alpha-D-muramate + L-alanine + ATP = UDP-N-acetyl-alpha-D-muramoyl-L-alanine + ADP + phosphate + H(+). Its pathway is cell wall biogenesis; peptidoglycan biosynthesis. Cell wall formation. This Listeria monocytogenes serovar 1/2a (strain ATCC BAA-679 / EGD-e) protein is UDP-N-acetylmuramate--L-alanine ligase.